The sequence spans 518 residues: F-box protein At1g47056 (518 aa).

The F-box domain maps to 37–82; sequence PDYTSSLPDECLALVFQFLNSGNRKRCALVCRRWMIVEGQNRYRLS.

The chain is F-box protein At1g47056 from Arabidopsis thaliana (Mouse-ear cress).